Consider the following 142-residue polypeptide: Transcriptional regulator MraZ (142 aa).

SpoVT-AbrB domains follow at residues 5–51 (ASAL…PRPE) and 77–120 (AADV…DAAT).

This sequence belongs to the MraZ family. As to quaternary structure, forms oligomers.

The protein localises to the cytoplasm. Its subcellular location is the nucleoid. The polypeptide is Transcriptional regulator MraZ (Cupriavidus pinatubonensis (strain JMP 134 / LMG 1197) (Cupriavidus necator (strain JMP 134))).